We begin with the raw amino-acid sequence, 318 residues long: Thioredoxin reductase (318 aa).

FAD is bound at residue 36-43 (TGLQQGGQ). C136 and C139 form a disulfide bridge. 286–295 (DVMDHNYRQA) is a binding site for FAD.

The protein belongs to the class-II pyridine nucleotide-disulfide oxidoreductase family. In terms of assembly, homodimer. It depends on FAD as a cofactor.

The protein localises to the cytoplasm. It catalyses the reaction [thioredoxin]-dithiol + NADP(+) = [thioredoxin]-disulfide + NADPH + H(+). This chain is Thioredoxin reductase (trxB), found in Haemophilus influenzae (strain ATCC 51907 / DSM 11121 / KW20 / Rd).